Reading from the N-terminus, the 238-residue chain is Ribonuclease PH (238 aa).

Residues arginine 86 and 124–126 (GTR) contribute to the phosphate site.

This sequence belongs to the RNase PH family. In terms of assembly, homohexameric ring arranged as a trimer of dimers.

The catalysed reaction is tRNA(n+1) + phosphate = tRNA(n) + a ribonucleoside 5'-diphosphate. Phosphorolytic 3'-5' exoribonuclease that plays an important role in tRNA 3'-end maturation. Removes nucleotide residues following the 3'-CCA terminus of tRNAs; can also add nucleotides to the ends of RNA molecules by using nucleoside diphosphates as substrates, but this may not be physiologically important. Probably plays a role in initiation of 16S rRNA degradation (leading to ribosome degradation) during starvation. The chain is Ribonuclease PH from Citrobacter koseri (strain ATCC BAA-895 / CDC 4225-83 / SGSC4696).